Here is a 275-residue protein sequence, read N- to C-terminus: NH(3)-dependent NAD(+) synthetase (275 aa).

50-57 (GISGGVDS) contributes to the ATP binding site. Asp-56 serves as a coordination point for Mg(2+). Arg-147 serves as a coordination point for deamido-NAD(+). Thr-167 provides a ligand contact to ATP. Glu-172 serves as a coordination point for Mg(2+). Deamido-NAD(+) contacts are provided by Lys-180 and Asp-187. Lys-196 and Thr-218 together coordinate ATP. 267-268 (HK) provides a ligand contact to deamido-NAD(+).

This sequence belongs to the NAD synthetase family. In terms of assembly, homodimer.

The catalysed reaction is deamido-NAD(+) + NH4(+) + ATP = AMP + diphosphate + NAD(+) + H(+). It participates in cofactor biosynthesis; NAD(+) biosynthesis; NAD(+) from deamido-NAD(+) (ammonia route): step 1/1. Catalyzes the ATP-dependent amidation of deamido-NAD to form NAD. Uses ammonia as a nitrogen source. The sequence is that of NH(3)-dependent NAD(+) synthetase from Stutzerimonas stutzeri (strain A1501) (Pseudomonas stutzeri).